The sequence spans 702 residues: Elongation factor G 2 (702 aa).

Positions 8-291 constitute a tr-type G domain; that stretch reads ELYRNIGIVA…AVIDYLPAPS (284 aa). GTP-binding positions include 17–24, 89–93, and 143–146; these read AHVDAGKT, DTPGH, and NKMD. A disordered region spans residues 293–314; it reads IPAIRGTDPDDEEKHDERHADD.

Belongs to the TRAFAC class translation factor GTPase superfamily. Classic translation factor GTPase family. EF-G/EF-2 subfamily.

The protein localises to the cytoplasm. Catalyzes the GTP-dependent ribosomal translocation step during translation elongation. During this step, the ribosome changes from the pre-translocational (PRE) to the post-translocational (POST) state as the newly formed A-site-bound peptidyl-tRNA and P-site-bound deacylated tRNA move to the P and E sites, respectively. Catalyzes the coordinated movement of the two tRNA molecules, the mRNA and conformational changes in the ribosome. The polypeptide is Elongation factor G 2 (fusB) (Pseudomonas aeruginosa (strain ATCC 15692 / DSM 22644 / CIP 104116 / JCM 14847 / LMG 12228 / 1C / PRS 101 / PAO1)).